A 211-amino-acid chain; its full sequence is Redox-sensing transcriptional repressor Rex (211 aa).

The H-T-H motif DNA-binding region spans 18–57 (LYYRFLKNLHASGKQRVSSAELSEAVKVDSATIRRDFSYF). 92–97 (GVGNLG) lines the NAD(+) pocket.

This sequence belongs to the transcriptional regulatory Rex family. As to quaternary structure, homodimer.

The protein resides in the cytoplasm. Functionally, modulates transcription in response to changes in cellular NADH/NAD(+) redox state. The sequence is that of Redox-sensing transcriptional repressor Rex from Anoxybacillus flavithermus (strain DSM 21510 / WK1).